The primary structure comprises 316 residues: uncharacterized protein (316 aa).

4 BNR repeats span residues Phe-62–Pro-73, Lys-124–Asn-135, Phe-196–Val-207, and Tyr-242–Gln-253.

This is an uncharacterized protein from Saccharomyces cerevisiae (strain ATCC 204508 / S288c) (Baker's yeast).